Here is a 33-residue protein sequence, read N- to C-terminus: Brevinin-2PTb (33 aa).

A disulfide bridge links cysteine 27 with cysteine 33.

As to expression, expressed by the skin glands.

Its subcellular location is the secreted. Has antibacterial activity against the Gram-positive bacterium S.aureus ATCC 25923 (MIC=9 uM) and the Gram-negative bacterium E.coli ATCC 25726 (MIC=9 uM). The protein is Brevinin-2PTb of Pulchrana picturata (Malaysian fire frog).